Here is a 254-residue protein sequence, read N- to C-terminus: uncharacterized protein (254 aa).

Positions 7 and 85 each coordinate NADP(+). Catalysis depends on serine 136, which acts as the Proton donor. NADP(+) is bound by residues tyrosine 150, lysine 154, valine 181, and threonine 183. The active-site Proton acceptor is tyrosine 150. The active-site Lowers pKa of active site Tyr is the lysine 154.

The protein belongs to the short-chain dehydrogenases/reductases (SDR) family.

This is an uncharacterized protein from Saccharomyces cerevisiae (strain ATCC 204508 / S288c) (Baker's yeast).